The following is a 747-amino-acid chain: NAD-dependent protein deacetylase sirtuin-1 (747 aa).

Residues 1–135 (MADEAALALQ…DDEGEEEEEA (135 aa)) are disordered. Residue alanine 2 is modified to N-acetylalanine. The segment at 2 to 139 (ADEAALALQP…EEEEEAAAAA (138 aa)) is interaction with CLOCK. Residues 2–268 (ADEAALALQP…LTGAGVSVSC (267 aa)) form an interaction with H1-4 region. Residues serine 14 and serine 26 each carry the phosphoserine modification. A Phosphoserine; by MAPK8 modification is found at serine 27. Positions 32–39 (PLRKRPRR) match the Nuclear localization signal motif. Position 47 is a phosphoserine; by MAPK8 (serine 47). The span at 61–100 (PAAARGCPGAAAAALWREAEAEAAAAGGEQEAQATAAAGE) shows a compositional bias: low complexity. Residues 120-135 (LYDEDDDDEGEEEEEA) show a composition bias toward acidic residues. The Nuclear export signal signature appears at 138–145 (AAIGYRDN). An interaction with CCAR2 region spans residues 143-541 (RDNLLFGDEI…LHVSEDSSSP (399 aa)). Residues serine 159, serine 162, serine 172, and serine 173 each carry the phosphoserine modification. Positions 223–230 (IVINILSE) match the Nuclear localization signal motif. A Deacetylase sirtuin-type domain is found at 236-496 (KRKDINTIED…NELCHRLGGE (261 aa)). Position 238 is an N6-acetyllysine (lysine 238). The required for interaction with the sumoylated form of CCAR2 stretch occupies residues 256-259 (IIVL). Residues 261-280 (GAGV…DGIY) and 345-348 (QNID) contribute to the NAD(+) site. Histidine 363 (proton acceptor) is an active-site residue. 2 residues coordinate Zn(2+): cysteine 371 and cysteine 374. Lysine 377 is subject to N6-acetyllysine. Zn(2+) is bound by residues cysteine 395 and cysteine 398. 2 positions are modified to S-nitrosocysteine: cysteine 395 and cysteine 398. The Nuclear export signal motif lies at 425–431 (AMKYDKD). N6-acetyllysine is present on lysine 430. NAD(+)-binding positions include 440 to 442 (GSS), 465 to 467 (NRE), and cysteine 482. Lysine 513 is subject to N6-acetyllysine. Disordered stretches follow at residues 523–549 (YLSE…PPDS) and 562–587 (SNDD…TSRN). Threonine 530 carries the phosphothreonine; by DYRK1A, DYRK3 and MAPK8 modification. The residue at position 535 (serine 535) is a Phosphoserine. Residues 537–549 (DSSSPERTSPPDS) are compositionally biased toward polar residues. The tract at residues 538–540 (SSS) is phosphorylated at one of three serine residues. Threonine 544 bears the Phosphothreonine mark. Serine 545 carries the post-translational modification Phosphoserine. Residues 569-580 (SESKGCMEEKPQ) show a composition bias toward basic and acidic residues. N6-acetyllysine is present on lysine 610. Serine 659 and serine 661 each carry phosphoserine; by CaMK2. The disordered stretch occupies residues 663–726 (DDVLSSSSCG…FGTDGDDQEA (64 aa)). The span at 666–677 (LSSSSCGSNSDS) shows a compositional bias: low complexity. Acidic residues predominate over residues 687–707 (EPMEDESEIEEFYNGLEDEPD). Threonine 719 bears the Phosphothreonine mark. Serine 747 bears the Phosphoserine mark.

It belongs to the sirtuin family. Class I subfamily. In terms of assembly, interacts with XBP1 isoform 2. Found in a complex with PCAF and MYOD1. Interacts with FOXO1; the interaction deacetylates FOXO1, resulting in its nuclear retention and promotion of its transcriptional activity Component of the eNoSC complex, composed of SIRT1, SUV39H1 and RRP8. Interacts with HES1, HEY2 and PML. Interacts with RPS19BP1/AROS. Interacts with CCAR2 (via N-terminus); the interaction disrupts the interaction between SIRT1 and p53/TP53. Interacts with SETD7; the interaction induces the dissociation of SIRT1 from p53/TP53 and increases p53/TP53 activity. Interacts with MYCN, NR1I2, CREBZF, TSC2, TLE1, FOS, JUN, NR0B2, PPARG, NCOR, IRS1, IRS2 and NMNAT1. Interacts with HNF1A; the interaction occurs under nutrient restriction. Interacts with SUZ12; the interaction mediates the association with the PRC4 histone methylation complex which is specific as an association with PCR2 and PCR3 complex variants is not found. Interacts with BCL6; leads to a epigenetic repression of specific target genes. Interacts with CLOCK, BMAL1 and PER2. Interacts with PPARA; the interaction seems to be modulated by NAD(+) levels. Interacts with NR1H3 and this interaction is inhibited in the presence of CCAR2. Interacts with CHEK2. Interacts with p53/TP53. Exhibits a preferential interaction with sumoylated CCAR2 over its unmodified form. Interacts with PACS2. Interacts with SIRT7. Interacts with PUS7. Interacts with TULP3. Interacts with MORN3; the interaction enhances the ubiquitination of p53/TP53. (Microbial infection) Interacts with HIV-1 Tat. Zn(2+) is required as a cofactor. Methylated on multiple lysine residues; methylation is enhanced after DNA damage and is dispensable for deacetylase activity toward p53/TP53. In terms of processing, phosphorylated. Phosphorylated by STK4/MST1, resulting in inhibition of SIRT1-mediated p53/TP53 deacetylation. Phosphorylation by MAPK8/JNK1 at Ser-27, Ser-47, and Thr-530 leads to increased nuclear localization and enzymatic activity. Phosphorylation at Thr-530 by DYRK1A and DYRK3 activates deacetylase activity and promotes cell survival. Phosphorylation by mammalian target of rapamycin complex 1 (mTORC1) at Ser-47 inhibits deacetylation activity. Phosphorylated by CaMK2, leading to increased p53/TP53 and NF-kappa-B p65/RELA deacetylation activity. Phosphorylation at Ser-27 implicating MAPK9 is linked to protein stability. There is some ambiguity for some phosphosites: Ser-159/Ser-162 and Thr-544/Ser-545. Post-translationally, proteolytically cleaved by cathepsin B upon TNF-alpha treatment to yield catalytic inactive but stable SirtT1 75 kDa fragment (75SirT1). S-nitrosylated by GAPDH, leading to inhibit the NAD-dependent protein deacetylase activity. In terms of processing, acetylated at various Lys residues. Deacetylated via an autocatalytic mechanism. Autodeacetylation at Lys-238 promotes its protein deacetylase activity. Post-translationally, ubiquitinated; leading to degradation. Deubiquitinated by USP22; leading to stabilization. As to expression, widely expressed.

It is found in the nucleus. The protein localises to the PML body. It localises to the cytoplasm. The protein resides in the mitochondrion. It catalyses the reaction N(6)-acetyl-L-lysyl-[protein] + NAD(+) + H2O = 2''-O-acetyl-ADP-D-ribose + nicotinamide + L-lysyl-[protein]. The enzyme catalyses N(6)-propanoyl-L-lysyl-[protein] + NAD(+) + H2O = 3''-O-propanoyl-ADP-D-ribose + nicotinamide + L-lysyl-[protein]. The catalysed reaction is N(6)-(2E)-butenoyl-L-lysyl-[protein] + NAD(+) + H2O = 2''-O-(2E)-but-2-enoyl-ADP-D-ribose + nicotinamide + L-lysyl-[protein]. It carries out the reaction N(6)-[(S)-lactoyl]-L-lysyl-[protein] + NAD(+) + H2O = 2''-O-(S)-lactoyl-ADP-D-ribose + nicotinamide + L-lysyl-[protein]. With respect to regulation, inhibited by nicotinamide. Activated by resveratrol (3,5,4'-trihydroxy-trans-stilbene), butein (3,4,2',4'-tetrahydroxychalcone), piceatannol (3,5,3',4'-tetrahydroxy-trans-stilbene), Isoliquiritigenin (4,2',4'-trihydroxychalcone), fisetin (3,7,3',4'-tetrahydroxyflavone) and quercetin (3,5,7,3',4'-pentahydroxyflavone). MAPK8/JNK1 and RPS19BP1/AROS act as positive regulators of deacetylation activity. Negatively regulated by CCAR2. Functionally, NAD-dependent protein deacetylase that links transcriptional regulation directly to intracellular energetics and participates in the coordination of several separated cellular functions such as cell cycle, response to DNA damage, metabolism, apoptosis and autophagy. Can modulate chromatin function through deacetylation of histones and can promote alterations in the methylation of histones and DNA, leading to transcriptional repression. Deacetylates a broad range of transcription factors and coregulators, thereby regulating target gene expression positively and negatively. Serves as a sensor of the cytosolic ratio of NAD(+)/NADH which is altered by glucose deprivation and metabolic changes associated with caloric restriction. Is essential in skeletal muscle cell differentiation and in response to low nutrients mediates the inhibitory effect on skeletal myoblast differentiation which also involves 5'-AMP-activated protein kinase (AMPK) and nicotinamide phosphoribosyltransferase (NAMPT). Component of the eNoSC (energy-dependent nucleolar silencing) complex, a complex that mediates silencing of rDNA in response to intracellular energy status and acts by recruiting histone-modifying enzymes. The eNoSC complex is able to sense the energy status of cell: upon glucose starvation, elevation of NAD(+)/NADP(+) ratio activates SIRT1, leading to histone H3 deacetylation followed by dimethylation of H3 at 'Lys-9' (H3K9me2) by SUV39H1 and the formation of silent chromatin in the rDNA locus. Deacetylates 'Lys-266' of SUV39H1, leading to its activation. Inhibits skeletal muscle differentiation by deacetylating PCAF and MYOD1. Deacetylates H2A and 'Lys-26' of H1-4. Deacetylates 'Lys-16' of histone H4 (in vitro). Involved in NR0B2/SHP corepression function through chromatin remodeling: Recruited to LRH1 target gene promoters by NR0B2/SHP thereby stimulating histone H3 and H4 deacetylation leading to transcriptional repression. Proposed to contribute to genomic integrity via positive regulation of telomere length; however, reports on localization to pericentromeric heterochromatin are conflicting. Proposed to play a role in constitutive heterochromatin (CH) formation and/or maintenance through regulation of the available pool of nuclear SUV39H1. Upon oxidative/metabolic stress decreases SUV39H1 degradation by inhibiting SUV39H1 polyubiquitination by MDM2. This increase in SUV39H1 levels enhances SUV39H1 turnover in CH, which in turn seems to accelerate renewal of the heterochromatin which correlates with greater genomic integrity during stress response. Deacetylates 'Lys-382' of p53/TP53 and impairs its ability to induce transcription-dependent proapoptotic program and modulate cell senescence. Deacetylates TAF1B and thereby represses rDNA transcription by the RNA polymerase I. Deacetylates MYC, promotes the association of MYC with MAX and decreases MYC stability leading to compromised transformational capability. Deacetylates FOXO3 in response to oxidative stress thereby increasing its ability to induce cell cycle arrest and resistance to oxidative stress but inhibiting FOXO3-mediated induction of apoptosis transcriptional activity; also leading to FOXO3 ubiquitination and protesomal degradation. Appears to have a similar effect on MLLT7/FOXO4 in regulation of transcriptional activity and apoptosis. Deacetylates DNMT1; thereby impairs DNMT1 methyltransferase-independent transcription repressor activity, modulates DNMT1 cell cycle regulatory function and DNMT1-mediated gene silencing. Deacetylates RELA/NF-kappa-B p65 thereby inhibiting its transactivating potential and augments apoptosis in response to TNF-alpha. Deacetylates HIF1A, KAT5/TIP60, RB1 and HIC1. Deacetylates FOXO1 resulting in its nuclear retention and enhancement of its transcriptional activity leading to increased gluconeogenesis in liver. Inhibits E2F1 transcriptional activity and apoptotic function, possibly by deacetylation. Involved in HES1- and HEY2-mediated transcriptional repression. In cooperation with MYCN seems to be involved in transcriptional repression of DUSP6/MAPK3 leading to MYCN stabilization by phosphorylation at 'Ser-62'. Deacetylates MEF2D. Required for antagonist-mediated transcription suppression of AR-dependent genes which may be linked to local deacetylation of histone H3. Represses HNF1A-mediated transcription. Required for the repression of ESRRG by CREBZF. Deacetylates NR1H3 and NR1H2 and deacetylation of NR1H3 at 'Lys-434' positively regulates transcription of NR1H3:RXR target genes, promotes NR1H3 proteasomal degradation and results in cholesterol efflux; a promoter clearing mechanism after reach round of transcription is proposed. Involved in lipid metabolism: deacetylates LPIN1, thereby inhibiting diacylglycerol synthesis. Implicated in regulation of adipogenesis and fat mobilization in white adipocytes by repression of PPARG which probably involves association with NCOR1 and SMRT/NCOR2. Deacetylates p300/EP300 and PRMT1. Deacetylates ACSS2 leading to its activation, and HMGCS1 deacetylation. Involved in liver and muscle metabolism. Through deacetylation and activation of PPARGC1A is required to activate fatty acid oxidation in skeletal muscle under low-glucose conditions and is involved in glucose homeostasis. Involved in regulation of PPARA and fatty acid beta-oxidation in liver. Involved in positive regulation of insulin secretion in pancreatic beta cells in response to glucose; the function seems to imply transcriptional repression of UCP2. Proposed to deacetylate IRS2 thereby facilitating its insulin-induced tyrosine phosphorylation. Deacetylates SREBF1 isoform SREBP-1C thereby decreasing its stability and transactivation in lipogenic gene expression. Involved in DNA damage response by repressing genes which are involved in DNA repair, such as XPC and TP73, deacetylating XRCC6/Ku70, and facilitating recruitment of additional factors to sites of damaged DNA, such as SIRT1-deacetylated NBN can recruit ATM to initiate DNA repair and SIRT1-deacetylated XPA interacts with RPA2. Also involved in DNA repair of DNA double-strand breaks by homologous recombination and specifically single-strand annealing independently of XRCC6/Ku70 and NBN. Promotes DNA double-strand breaks by mediating deacetylation of SIRT6. Transcriptional suppression of XPC probably involves an E2F4:RBL2 suppressor complex and protein kinase B (AKT) signaling. Transcriptional suppression of TP73 probably involves E2F4 and PCAF. Deacetylates WRN thereby regulating its helicase and exonuclease activities and regulates WRN nuclear translocation in response to DNA damage. Deacetylates APEX1 at 'Lys-6' and 'Lys-7' and stimulates cellular AP endonuclease activity by promoting the association of APEX1 to XRCC1. Catalyzes deacetylation of ERCC4/XPF, thereby impairing interaction with ERCC1 and nucleotide excision repair (NER). Increases p53/TP53-mediated transcription-independent apoptosis by blocking nuclear translocation of cytoplasmic p53/TP53 and probably redirecting it to mitochondria. Deacetylates XRCC6/Ku70 at 'Lys-539' and 'Lys-542' causing it to sequester BAX away from mitochondria thereby inhibiting stress-induced apoptosis. Is involved in autophagy, presumably by deacetylating ATG5, ATG7 and MAP1LC3B/ATG8. Deacetylates AKT1 which leads to enhanced binding of AKT1 and PDK1 to PIP3 and promotes their activation. Proposed to play role in regulation of STK11/LBK1-dependent AMPK signaling pathways implicated in cellular senescence which seems to involve the regulation of the acetylation status of STK11/LBK1. Can deacetylate STK11/LBK1 and thereby increase its activity, cytoplasmic localization and association with STRAD; however, the relevance of such activity in normal cells is unclear. In endothelial cells is shown to inhibit STK11/LBK1 activity and to promote its degradation. Deacetylates SMAD7 at 'Lys-64' and 'Lys-70' thereby promoting its degradation. Deacetylates CIITA and augments its MHC class II transactivation and contributes to its stability. Deacetylates MECOM/EVI1. Deacetylates PML at 'Lys-487' and this deacetylation promotes PML control of PER2 nuclear localization. During the neurogenic transition, represses selective NOTCH1-target genes through histone deacetylation in a BCL6-dependent manner and leading to neuronal differentiation. Regulates the circadian expression of several core clock genes, including BMAL1, RORC, PER2 and CRY1 and plays a critical role in maintaining a controlled rhythmicity in histone acetylation, thereby contributing to circadian chromatin remodeling. Deacetylates BMAL1 and histones at the circadian gene promoters in order to facilitate repression by inhibitory components of the circadian oscillator. Deacetylates PER2, facilitating its ubiquitination and degradation by the proteasome. Protects cardiomyocytes against palmitate-induced apoptosis. Deacetylates XBP1 isoform 2; deacetylation decreases protein stability of XBP1 isoform 2 and inhibits its transcriptional activity. Deacetylates PCK1 and directs its activity toward phosphoenolpyruvate production promoting gluconeogenesis. Involved in the CCAR2-mediated regulation of PCK1 and NR1D1. Deacetylates CTNB1 at 'Lys-49'. In POMC (pro-opiomelanocortin) neurons, required for leptin-induced activation of PI3K signaling. Deacetylates SOX9; promoting SOX9 nuclear localization and transactivation activity. Involved in the regulation of centrosome duplication: deacetylates CENATAC in G1 phase, allowing for SASS6 accumulation on the centrosome and subsequent procentriole assembly. Deacetylates NDC80/HEC1. In addition to protein deacetylase activity, also acts as a protein-lysine deacylase by mediating protein delactylation, depropionylation and decrotonylation. Mediates depropionylation of Osterix (SP7). Catalyzes decrotonylation of histones; it however does not represent a major histone decrotonylase. Mediates protein delactylation of TEAD1 and YAP1. In terms of biological role, deacetylates 'Lys-382' of p53/TP53, however with lower activity than isoform 1. In combination, the two isoforms exert an additive effect. Isoform 2 regulates p53/TP53 expression and cellular stress response and is in turn repressed by p53/TP53 presenting a SIRT1 isoform-dependent auto-regulatory loop. Its function is as follows. Catalytically inactive 75SirT1 may be involved in regulation of apoptosis. May be involved in protecting chondrocytes from apoptotic death by associating with cytochrome C and interfering with apoptosome assembly. (Microbial infection) In case of HIV-1 infection, interacts with and deacetylates the viral Tat protein. The viral Tat protein inhibits SIRT1 deacetylation activity toward RELA/NF-kappa-B p65, thereby potentiates its transcriptional activity and SIRT1 is proposed to contribute to T-cell hyperactivation during infection. The sequence is that of NAD-dependent protein deacetylase sirtuin-1 from Homo sapiens (Human).